The sequence spans 343 residues: L-threonine 3-dehydrogenase (343 aa).

C38 is a binding site for Zn(2+). Active-site charge relay system residues include T40 and H43. Residues H63, E64, C93, C96, C99, and C107 each coordinate Zn(2+). Residues I175, D195, R200, 262–264 (LGI), and 286–287 (IY) contribute to the NAD(+) site.

The protein belongs to the zinc-containing alcohol dehydrogenase family. In terms of assembly, homotetramer. Requires Zn(2+) as cofactor.

It localises to the cytoplasm. The catalysed reaction is L-threonine + NAD(+) = (2S)-2-amino-3-oxobutanoate + NADH + H(+). It functions in the pathway amino-acid degradation; L-threonine degradation via oxydo-reductase pathway; glycine from L-threonine: step 1/2. Its function is as follows. Catalyzes the NAD(+)-dependent oxidation of L-threonine to 2-amino-3-ketobutyrate. The protein is L-threonine 3-dehydrogenase of Burkholderia mallei (strain NCTC 10247).